The sequence spans 160 residues: NADH-quinone oxidoreductase subunit B (160 aa).

4 residues coordinate [4Fe-4S] cluster: Cys-37, Cys-38, Cys-102, and Cys-132.

Belongs to the complex I 20 kDa subunit family. As to quaternary structure, NDH-1 is composed of 14 different subunits. Subunits NuoB, C, D, E, F, and G constitute the peripheral sector of the complex. It depends on [4Fe-4S] cluster as a cofactor.

It is found in the cell inner membrane. The enzyme catalyses a quinone + NADH + 5 H(+)(in) = a quinol + NAD(+) + 4 H(+)(out). In terms of biological role, NDH-1 shuttles electrons from NADH, via FMN and iron-sulfur (Fe-S) centers, to quinones in the respiratory chain. Couples the redox reaction to proton translocation (for every two electrons transferred, four hydrogen ions are translocated across the cytoplasmic membrane), and thus conserves the redox energy in a proton gradient. This is NADH-quinone oxidoreductase subunit B from Neisseria meningitidis serogroup A / serotype 4A (strain DSM 15465 / Z2491).